An 83-amino-acid chain; its full sequence is Small ribosomal subunit protein uS17 (83 aa).

The protein belongs to the universal ribosomal protein uS17 family. In terms of assembly, part of the 30S ribosomal subunit.

One of the primary rRNA binding proteins, it binds specifically to the 5'-end of 16S ribosomal RNA. The polypeptide is Small ribosomal subunit protein uS17 (Campylobacter curvus (strain 525.92)).